A 319-amino-acid chain; its full sequence is F-box only protein 8 (319 aa).

The F-box domain occupies 68 to 111 (FINLEMLPPELSFTILSYLNATDLCLASCVWQDLANDELLWQGL). In terms of domain architecture, SEC7 spans 146–276 (FNANPEEGVS…LILLSIDLTS (131 aa)).

As to expression, high expression in brain, heart, kidney, liver, lung, skeletal muscle, testis, and day-7 embryos.

Its function is as follows. May promote guanine-nucleotide exchange on an ARF. Promotes the activation of ARF through replacement of GDP with GTP (Potential). The protein is F-box only protein 8 (Fbxo8) of Mus musculus (Mouse).